The chain runs to 51 residues: UPF0391 membrane protein Psyc_0130 (51 aa).

2 helical membrane passes run 6 to 26 and 28 to 47; these read IIFA…VAGL and ANFA…VAFV.

This sequence belongs to the UPF0391 family.

The protein localises to the cell membrane. The sequence is that of UPF0391 membrane protein Psyc_0130 from Psychrobacter arcticus (strain DSM 17307 / VKM B-2377 / 273-4).